The primary structure comprises 260 residues: Coiled-coil domain-containing protein 127 (260 aa).

Residues 76 to 139 adopt a coiled-coil conformation; it reads AVISEHRRAV…EKSRLQPLRN (64 aa).

The protein is Coiled-coil domain-containing protein 127 (Ccdc127) of Mus musculus (Mouse).